Consider the following 140-residue polypeptide: MLPAAMKGLGLALLAVLLCSAPAHGLWCQDCTLTTNSSHCTPKQCQPSDTVCASVRITDPSSSRKDHSVNKMCASSCDFVKRHFFSDYLMGFINSGILKVDVDCCEKDLCNGAAGAGHSPWALAGGLLLSLGPALLWAGP.

An N-terminal signal peptide occupies residues 1 to 25 (MLPAAMKGLGLALLAVLLCSAPAHG). One can recognise a UPAR/Ly6 domain in the interval 26–91 (LWCQDCTLTT…RHFFSDYLMG (66 aa)). Intrachain disulfides connect C28–C52, C31–C40, C45–C73, C77–C104, and C105–C110. N36 carries N-linked (GlcNAc...) asparagine glycosylation. The GPI-anchor amidated glycine moiety is linked to residue G115. A propeptide spans 116–140 (AGHSPWALAGGLLLSLGPALLWAGP) (removed in mature form).

Interacts with CHRNA4 and CHRNA7. Highly expressed in brain (cerebral cortex, amygdala, hippocampus and subthalamic nucleus) and in acute human leukemic cell line MOLT-3. Also found in lower levels in testis, pancreas, small intestine and colon.

It localises to the cell membrane. In terms of biological role, believed to act as a modulator of nicotinic acetylcholine receptors (nAChRs) activity. In vitro inhibits alpha-3:beta-4-containing nAChRs maximum response. May play a role in the intracellular trafficking of alpha-7-containing nAChRs and may inhibit their expression at the cell surface. Seems to inhibit alpha-7/CHRNA7 signaling in hippocampal neurons. This chain is Lymphocyte antigen 6H (LY6H), found in Homo sapiens (Human).